A 568-amino-acid chain; its full sequence is Urocanate hydratase (568 aa).

NAD(+)-binding positions include 58-59 (GG), glutamine 136, 182-184 (GMG), glutamate 202, arginine 207, 248-249 (NA), 269-273 (QTSAH), 279-280 (YL), and tyrosine 328. Cysteine 416 is an active-site residue. An NAD(+)-binding site is contributed by glycine 498.

It belongs to the urocanase family. It depends on NAD(+) as a cofactor.

The protein resides in the cytoplasm. The enzyme catalyses 4-imidazolone-5-propanoate = trans-urocanate + H2O. Its pathway is amino-acid degradation; L-histidine degradation into L-glutamate; N-formimidoyl-L-glutamate from L-histidine: step 2/3. Its function is as follows. Catalyzes the conversion of urocanate to 4-imidazolone-5-propionate. The polypeptide is Urocanate hydratase (Photobacterium profundum (strain SS9)).